A 1051-amino-acid chain; its full sequence is DNA-directed RNA polymerase subunit beta (1051 aa).

It belongs to the RNA polymerase beta chain family. In terms of assembly, in plastids the minimal PEP RNA polymerase catalytic core is composed of four subunits: alpha, beta, beta', and beta''. When a (nuclear-encoded) sigma factor is associated with the core the holoenzyme is formed, which can initiate transcription (Potential).

The protein localises to the plastid. The protein resides in the apicoplast. It catalyses the reaction RNA(n) + a ribonucleoside 5'-triphosphate = RNA(n+1) + diphosphate. DNA-dependent RNA polymerase catalyzes the transcription of DNA into RNA using the four ribonucleoside triphosphates as substrates. The chain is DNA-directed RNA polymerase subunit beta (rpoB) from Toxoplasma gondii.